Reading from the N-terminus, the 475-residue chain is Vitronectin (475 aa).

The N-terminal stretch at 1-19 (MAPLRPIFTLALLLWVVLA) is a signal peptide. Residues 20–63 (DQESCKDRCTEGFNANRKCQCDELCSYYQSCCADYAAECKPQVT) enclose the SMB domain. Cystine bridges form between C24–C28, C24–C40, C28–C58, C38–C40, C38–C51, C44–C50, and C51–C58. Positions 64–66 (RGD) match the Cell attachment site motif. T69 is modified (phosphothreonine). A sulfotyrosine mark is found at Y75, Y78, and Y80. The N-linked (GlcNAc...) asparagine glycan is linked to N87. The tract at residues 87 to 123 (NASVHAQPESPTVGQEPTLSPDLQTEGGAEPTHEVPL) is disordered. Polar residues predominate over residues 95 to 109 (ESPTVGQEPTLSPDL). Hemopexin repeat units follow at residues 158–202 (GKPF…VWGI), 203–250 (EGPI…FSGI), and 251–305 (PDNV…FEHF). N169 and N242 each carry an N-linked (GlcNAc...) asparagine glycan. 2 positions are modified to sulfotyrosine: Y279 and Y282. S312 is modified (phosphoserine). Residues 359–391 (LTPSPSAKKQKSRRRSRKRYRSRYGRGRSQNSR) form a disordered region. Basic residues predominate over residues 366 to 384 (KKQKSRRRSRKRYRSRYGR). Residues 366-392 (KKQKSRRRSRKRYRSRYGRGRSQNSRR) are glycosaminoglycan binding region. A Phosphoserine modification is found at S394. The Hemopexin 4 repeat unit spans residues 419 to 469 (TSWLKPATSEPIQSVYFFSGDKYYRVNLRTQRVDTVNPPYPRSIAQYWLGC).

Interacts with SERPINE1/PAI1 and C1QBP. Monomer. Sulfated on tyrosine residues. Post-translationally, N- and O-glycosylated. In terms of processing, it has been suggested that the active SMB domain may be permitted considerable disulfide bond heterogeneity or variability, thus two alternate disulfide patterns based on 3D structures are described with 1 disulfide bond conserved in both. In terms of tissue distribution, plasma.

It is found in the secreted. Its subcellular location is the extracellular space. Its function is as follows. Vitronectin is a cell adhesion and spreading factor found in serum and tissues. Vitronectin interact with glycosaminoglycans and proteoglycans. Is recognized by certain members of the integrin family and serves as a cell-to-substrate adhesion molecule. Inhibitor of the membrane-damaging effect of the terminal cytolytic complement pathway. This is Vitronectin (VTN) from Oryctolagus cuniculus (Rabbit).